Reading from the N-terminus, the 25-residue chain is Secapin-1 (25 aa).

Cys9 and Cys20 are joined by a disulfide.

As to expression, expressed by the venom gland.

The protein resides in the secreted. In terms of biological role, serine protease inhibitor which exhibits antifibrinolytic, antielastolytic and antimicrobial activities. Displays antimicrobial activity against bacteria and fungi. Likely functions in the innate immune response to microbial infection and possibly in the venom, as an antifibrinolytic agent. This Apis mellifera (Honeybee) protein is Secapin-1.